The sequence spans 278 residues: Ribosomal RNA small subunit methyltransferase A (278 aa).

Positions 28, 30, 55, 77, 103, and 122 each coordinate S-adenosyl-L-methionine.

This sequence belongs to the class I-like SAM-binding methyltransferase superfamily. rRNA adenine N(6)-methyltransferase family. RsmA subfamily.

It is found in the cytoplasm. The enzyme catalyses adenosine(1518)/adenosine(1519) in 16S rRNA + 4 S-adenosyl-L-methionine = N(6)-dimethyladenosine(1518)/N(6)-dimethyladenosine(1519) in 16S rRNA + 4 S-adenosyl-L-homocysteine + 4 H(+). Functionally, specifically dimethylates two adjacent adenosines (A1518 and A1519) in the loop of a conserved hairpin near the 3'-end of 16S rRNA in the 30S particle. May play a critical role in biogenesis of 30S subunits. The chain is Ribosomal RNA small subunit methyltransferase A from Cereibacter sphaeroides (strain ATCC 17029 / ATH 2.4.9) (Rhodobacter sphaeroides).